The following is a 216-amino-acid chain: GTP-binding nuclear protein Ran, testis-specific isoform (216 aa).

Alanine 2 is modified (N-acetylalanine). The Small GTPase Ran-type domain occupies 7-171 (PQIQFKLVLV…FWLARKLIGD (165 aa)). Residue 17 to 24 (GDGGTGKT) participates in GTP binding. Threonine 24 bears the Phosphothreonine mark. The interval 37 to 45 (KEYVATLGV) is switch-I. Lysine 60 is subject to N6-acetyllysine. Residue 65 to 69 (DTAGQ) coordinates GTP. A switch-II region spans residues 68-84 (GQEKFGGLRDGYYIQAQ). Lysine 71 carries the N6-acetyllysine; alternate modification. Lysine 71 participates in a covalent cross-link: Glycyl lysine isopeptide (Lys-Gly) (interchain with G-Cter in SUMO2); alternate. Residue lysine 71 forms a Glycyl lysine isopeptide (Lys-Gly) (interchain with G-Cter in ubiquitin); alternate linkage. Position 99 is an N6-acetyllysine (lysine 99). 122–125 (NKVD) is a GTP binding site. Residue lysine 134 is modified to N6-acetyllysine. A Glycyl lysine isopeptide (Lys-Gly) (interchain with G-Cter in SUMO2) cross-link involves residue lysine 152. Residue lysine 159 is modified to N6-acetyllysine; alternate. Lysine 159 carries the N6-succinyllysine; alternate modification.

This sequence belongs to the small GTPase superfamily. Ran family. Testis specific.

The protein resides in the nucleus. It catalyses the reaction GTP + H2O = GDP + phosphate + H(+). Functionally, GTP-binding protein involved in nucleocytoplasmic transport. Required for the import of protein into the nucleus and also for RNA export. Involved in chromatin condensation and control of cell cycle. In Rattus norvegicus (Rat), this protein is GTP-binding nuclear protein Ran, testis-specific isoform (Rasl2-9).